A 364-amino-acid polypeptide reads, in one-letter code: Cobalt-precorrin-5B C(1)-methyltransferase (364 aa).

The protein belongs to the CbiD family.

It carries out the reaction Co-precorrin-5B + S-adenosyl-L-methionine = Co-precorrin-6A + S-adenosyl-L-homocysteine. It participates in cofactor biosynthesis; adenosylcobalamin biosynthesis; cob(II)yrinate a,c-diamide from sirohydrochlorin (anaerobic route): step 6/10. In terms of biological role, catalyzes the methylation of C-1 in cobalt-precorrin-5B to form cobalt-precorrin-6A. This Pseudomonas entomophila (strain L48) protein is Cobalt-precorrin-5B C(1)-methyltransferase.